A 123-amino-acid chain; its full sequence is MARIAGVDLPREKRVEVGLTYIFGIGRQTSNKILAATGINVDTRIKDLTEEEVNELRKLIDADYQVEGDLRREVSLNIKRLKEIRCYRGIRHTKGLPVRGQKTKTNARTRKGPKRTVGRKKKK.

Positions 95 to 123 (GLPVRGQKTKTNARTRKGPKRTVGRKKKK) are disordered. Basic residues predominate over residues 101-123 (QKTKTNARTRKGPKRTVGRKKKK).

The protein belongs to the universal ribosomal protein uS13 family. Part of the 30S ribosomal subunit. Forms a loose heterodimer with protein S19. Forms two bridges to the 50S subunit in the 70S ribosome.

Its function is as follows. Located at the top of the head of the 30S subunit, it contacts several helices of the 16S rRNA. In the 70S ribosome it contacts the 23S rRNA (bridge B1a) and protein L5 of the 50S subunit (bridge B1b), connecting the 2 subunits; these bridges are implicated in subunit movement. Contacts the tRNAs in the A and P-sites. In Alkaliphilus metalliredigens (strain QYMF), this protein is Small ribosomal subunit protein uS13.